A 385-amino-acid chain; its full sequence is Probable tRNA sulfurtransferase (385 aa).

Positions 57-160 (DGVIERVKKV…RGNAYVFTDK (104 aa)) constitute a THUMP domain. Residues 180-181 (ML), 205-206 (YY), Arg262, Gly284, and Gln293 contribute to the ATP site.

Belongs to the ThiI family.

It localises to the cytoplasm. It catalyses the reaction [ThiI sulfur-carrier protein]-S-sulfanyl-L-cysteine + a uridine in tRNA + 2 reduced [2Fe-2S]-[ferredoxin] + ATP + H(+) = [ThiI sulfur-carrier protein]-L-cysteine + a 4-thiouridine in tRNA + 2 oxidized [2Fe-2S]-[ferredoxin] + AMP + diphosphate. It carries out the reaction [ThiS sulfur-carrier protein]-C-terminal Gly-Gly-AMP + S-sulfanyl-L-cysteinyl-[cysteine desulfurase] + AH2 = [ThiS sulfur-carrier protein]-C-terminal-Gly-aminoethanethioate + L-cysteinyl-[cysteine desulfurase] + A + AMP + 2 H(+). Its pathway is cofactor biosynthesis; thiamine diphosphate biosynthesis. Its function is as follows. Catalyzes the ATP-dependent transfer of a sulfur to tRNA to produce 4-thiouridine in position 8 of tRNAs, which functions as a near-UV photosensor. Also catalyzes the transfer of sulfur to the sulfur carrier protein ThiS, forming ThiS-thiocarboxylate. This is a step in the synthesis of thiazole, in the thiamine biosynthesis pathway. The sulfur is donated as persulfide by IscS. This chain is Probable tRNA sulfurtransferase, found in Clostridium perfringens (strain 13 / Type A).